The sequence spans 140 residues: Profilin-1 (140 aa).

N-acetylalanine is present on Ala-2. The residue at position 28 (Ser-28) is a Phosphoserine. Lys-54 is covalently cross-linked (Glycyl lysine isopeptide (Lys-Gly) (interchain with G-Cter in SUMO2); alternate). A Glycyl lysine isopeptide (Lys-Gly) (interchain with G-Cter in ubiquitin); alternate cross-link involves residue Lys-54. A Phosphoserine modification is found at Ser-57. N6-acetyllysine is present on Lys-108. At Tyr-129 the chain carries Phosphotyrosine. Position 138 is a phosphoserine; by ROCK1 (Ser-138).

The protein belongs to the profilin family. Found in a complex with XPO6, Ran, ACTB and PFN1. Interacts with ACTB. Interacts with VASP. Interacts with HTT. Interacts with SH3BGRL. Occurs in many kinds of cells as a complex with monomeric actin in a 1:1 ratio. Interacts with ACTMAP. Phosphorylation at Ser-138 reduces its affinity for G-actin and blocks its interaction with HTT, reducing its ability to inhibit androgen receptor (AR) and HTT aggregation.

The protein resides in the cytoplasm. It is found in the cytoskeleton. Its function is as follows. Binds to actin and affects the structure of the cytoskeleton. At high concentrations, profilin prevents the polymerization of actin, whereas it enhances it at low concentrations. By binding to PIP2, it inhibits the formation of IP3 and DG. Inhibits androgen receptor (AR) and HTT aggregation and binding of G-actin is essential for its inhibition of AR. The protein is Profilin-1 (PFN1) of Bos taurus (Bovine).